The primary structure comprises 945 residues: Alanine--tRNA ligase (945 aa).

The Zn(2+) site is built by His564, His568, Cys666, and His670. Residues 911–945 (SGGGRPDMAQAGGKDASKLPEALQQARETMTEKLG) form a disordered region.

The protein belongs to the class-II aminoacyl-tRNA synthetase family. Zn(2+) is required as a cofactor.

The protein resides in the cytoplasm. It catalyses the reaction tRNA(Ala) + L-alanine + ATP = L-alanyl-tRNA(Ala) + AMP + diphosphate. Functionally, catalyzes the attachment of alanine to tRNA(Ala) in a two-step reaction: alanine is first activated by ATP to form Ala-AMP and then transferred to the acceptor end of tRNA(Ala). Also edits incorrectly charged Ser-tRNA(Ala) and Gly-tRNA(Ala) via its editing domain. This is Alanine--tRNA ligase from Rhodopirellula baltica (strain DSM 10527 / NCIMB 13988 / SH1).